Reading from the N-terminus, the 312-residue chain is MKVSIFGAGRVGISIAYSLLHTKIADEMVIVDIDIKRAEGEVLDLYHSTPFLKRCNITAGNPHDILNSDFVIITAGASQSAGESRLSLTKRNVKIIRQIAAQIKKYSPDAIVINVSNPVDVLSYVLWKETKFNWRKVIGTGTILDTARFRALVAKQCGVSPMSVHAYIIGEHGDSELLVWSNATIGGVSIKRFCQFCTNKNCTPLESLFEQTKNAAYEIIEKKGATNLAIGTATAALVESIYRDEKRVWTVSVFQDNLYIGFPAILGKNGVEKLVPVKLNSVEKEAFERSKEVIKKYIKEGEKSEREESSSN.

Residues Val-11, Asp-32, Arg-37, and Gly-76–Ala-77 each bind NAD(+). Substrate-binding positions include Gln-79, Arg-85, and Asn-117–Asp-120. NAD(+) contacts are provided by residues Val-115 to Asn-117 and Thr-140. Substrate is bound at residue Asp-145 to Arg-148. Arg-150 and His-165 together coordinate beta-D-fructose 1,6-bisphosphate. His-172 serves as the catalytic Proton acceptor. Tyr-217 carries the phosphotyrosine modification. Residue Thr-226 participates in substrate binding.

This sequence belongs to the LDH/MDH superfamily. LDH family. In terms of assembly, homotetramer.

It localises to the cytoplasm. It catalyses the reaction (S)-lactate + NAD(+) = pyruvate + NADH + H(+). It functions in the pathway fermentation; pyruvate fermentation to lactate; (S)-lactate from pyruvate: step 1/1. Its activity is regulated as follows. Allosterically activated by fructose 1,6-bisphosphate (FBP). In terms of biological role, catalyzes the conversion of lactate to pyruvate. This is L-lactate dehydrogenase from Pseudothermotoga lettingae (strain ATCC BAA-301 / DSM 14385 / NBRC 107922 / TMO) (Thermotoga lettingae).